The primary structure comprises 492 residues: Ketol-acid reductoisomerase (NADP(+)) (492 aa).

One can recognise a KARI N-terminal Rossmann domain in the interval 15–208 (AQLGKCRFMA…GAHRAGVLES (194 aa)). NADP(+) contacts are provided by residues 45–48 (CGAQ), arginine 68, arginine 76, serine 78, and 108–110 (DKQ). Residue histidine 132 is part of the active site. Residue glycine 158 coordinates NADP(+). 2 KARI C-terminal knotted domains span residues 209–344 (SFVA…NSPE) and 345–485 (YDGK…MTDM). Positions 217, 221, 389, and 393 each coordinate Mg(2+). Serine 414 serves as a coordination point for substrate.

It belongs to the ketol-acid reductoisomerase family. Requires Mg(2+) as cofactor.

The catalysed reaction is (2R)-2,3-dihydroxy-3-methylbutanoate + NADP(+) = (2S)-2-acetolactate + NADPH + H(+). The enzyme catalyses (2R,3R)-2,3-dihydroxy-3-methylpentanoate + NADP(+) = (S)-2-ethyl-2-hydroxy-3-oxobutanoate + NADPH + H(+). Its pathway is amino-acid biosynthesis; L-isoleucine biosynthesis; L-isoleucine from 2-oxobutanoate: step 2/4. The protein operates within amino-acid biosynthesis; L-valine biosynthesis; L-valine from pyruvate: step 2/4. Functionally, involved in the biosynthesis of branched-chain amino acids (BCAA). Catalyzes an alkyl-migration followed by a ketol-acid reduction of (S)-2-acetolactate (S2AL) to yield (R)-2,3-dihydroxy-isovalerate. In the isomerase reaction, S2AL is rearranged via a Mg-dependent methyl migration to produce 3-hydroxy-3-methyl-2-ketobutyrate (HMKB). In the reductase reaction, this 2-ketoacid undergoes a metal-dependent reduction by NADPH to yield (R)-2,3-dihydroxy-isovalerate. This Photorhabdus laumondii subsp. laumondii (strain DSM 15139 / CIP 105565 / TT01) (Photorhabdus luminescens subsp. laumondii) protein is Ketol-acid reductoisomerase (NADP(+)).